Here is a 57-residue protein sequence, read N- to C-terminus: Protein GnsA (57 aa).

This sequence belongs to the gns family.

The polypeptide is Protein GnsA (gnsA) (Escherichia coli O6:H1 (strain CFT073 / ATCC 700928 / UPEC)).